Consider the following 356-residue polypeptide: NADH-quinone oxidoreductase subunit H (356 aa).

8 helical membrane-spanning segments follow: residues 18–38 (IIMI…IAYI), 87–107 (GVFL…WAVI), 120–140 (VGIL…IMAG), 166–186 (IGFV…SAVV), 205–225 (ILNW…VSAL), 265–285 (AITT…LPPI), 292–312 (WVPG…LIAM), and 333–353 (FLPL…FAGI).

It belongs to the complex I subunit 1 family. NDH-1 is composed of 14 different subunits. Subunits NuoA, H, J, K, L, M, N constitute the membrane sector of the complex.

It localises to the cell inner membrane. It catalyses the reaction a quinone + NADH + 5 H(+)(in) = a quinol + NAD(+) + 4 H(+)(out). Its function is as follows. NDH-1 shuttles electrons from NADH, via FMN and iron-sulfur (Fe-S) centers, to quinones in the respiratory chain. The immediate electron acceptor for the enzyme in this species is believed to be ubiquinone. Couples the redox reaction to proton translocation (for every two electrons transferred, four hydrogen ions are translocated across the cytoplasmic membrane), and thus conserves the redox energy in a proton gradient. This subunit may bind ubiquinone. This Bradyrhizobium sp. (strain ORS 278) protein is NADH-quinone oxidoreductase subunit H.